We begin with the raw amino-acid sequence, 288 residues long: Beta-lactamase CARB-4 (288 aa).

Residues 1–17 (MKLLLVFSLLIPSMVFA) form the signal peptide. S65 (acyl-ester intermediate) is an active-site residue. Residues C72 and C118 are joined by a disulfide bond. 229–231 (RSG) contributes to the substrate binding site.

It belongs to the class-A beta-lactamase family.

The enzyme catalyses a beta-lactam + H2O = a substituted beta-amino acid. With respect to regulation, inhibited by clavulanic acid and sulbactam. Hydrolyzes carbenicillin. Methicillin and oxacillin are weakly hydrolyzed. The sequence is that of Beta-lactamase CARB-4 (carB4) from Pseudomonas aeruginosa.